A 92-amino-acid polypeptide reads, in one-letter code: Large ribosomal subunit protein eL43z (92 aa).

Residues 39-60 form a C4-type zinc finger; sequence CEFCGKFAVKRKAVGIWGCKDC.

Belongs to the eukaryotic ribosomal protein eL43 family.

The polypeptide is Large ribosomal subunit protein eL43z (Oryza sativa subsp. japonica (Rice)).